The chain runs to 363 residues: DNA replication and repair protein RecF (363 aa).

33-40 lines the ATP pocket; that stretch reads GDNGQGKT.

This sequence belongs to the RecF family.

It localises to the cytoplasm. Its function is as follows. The RecF protein is involved in DNA metabolism; it is required for DNA replication and normal SOS inducibility. RecF binds preferentially to single-stranded, linear DNA. It also seems to bind ATP. The polypeptide is DNA replication and repair protein RecF (Tropheryma whipplei (strain TW08/27) (Whipple's bacillus)).